The chain runs to 331 residues: Adenosine deaminase (331 aa).

Zn(2+)-binding residues include His12 and His14. Substrate contacts are provided by His14, Asp16, and Gly170. His197 contacts Zn(2+). Glu200 (proton donor) is an active-site residue. Zn(2+) is bound at residue Asp278.

This sequence belongs to the metallo-dependent hydrolases superfamily. Adenosine and AMP deaminases family. Adenosine deaminase subfamily. Requires Zn(2+) as cofactor.

It carries out the reaction adenosine + H2O + H(+) = inosine + NH4(+). The enzyme catalyses 2'-deoxyadenosine + H2O + H(+) = 2'-deoxyinosine + NH4(+). Functionally, catalyzes the hydrolytic deamination of adenosine and 2-deoxyadenosine. The sequence is that of Adenosine deaminase from Vibrio vulnificus (strain YJ016).